Consider the following 198-residue polypeptide: Transcriptional regulator GfcR (198 aa).

This sequence belongs to the purine/pyrimidine phosphoribosyltransferase family. GfcR subfamily.

This Methanosphaera stadtmanae (strain ATCC 43021 / DSM 3091 / JCM 11832 / MCB-3) protein is Transcriptional regulator GfcR.